The primary structure comprises 133 residues: MRHRVAHRKFSRTSAHRMSMLLNLCISLIKHERISTTLPKAKEIRPYVEKLITIGKVYKEKNLVYGKRLLISKIKNPDIADKLIGILSVRYKSRNGGYTRIIKNGFRKGDSAPMAIIELVDRQIITVESNKNS.

Belongs to the bacterial ribosomal protein bL17 family. Part of the 50S ribosomal subunit. Contacts protein L32.

In Ehrlichia chaffeensis (strain ATCC CRL-10679 / Arkansas), this protein is Large ribosomal subunit protein bL17.